The chain runs to 663 residues: 4-hydroxy-3-methylbut-2-en-1-yl diphosphate synthase (flavodoxin) (663 aa).

Residues cysteine 568, cysteine 571, cysteine 602, and glutamate 609 each coordinate [4Fe-4S] cluster.

This sequence belongs to the IspG family. [4Fe-4S] cluster is required as a cofactor.

It carries out the reaction (2E)-4-hydroxy-3-methylbut-2-enyl diphosphate + oxidized [flavodoxin] + H2O + 2 H(+) = 2-C-methyl-D-erythritol 2,4-cyclic diphosphate + reduced [flavodoxin]. The protein operates within isoprenoid biosynthesis; isopentenyl diphosphate biosynthesis via DXP pathway; isopentenyl diphosphate from 1-deoxy-D-xylulose 5-phosphate: step 5/6. Functionally, converts 2C-methyl-D-erythritol 2,4-cyclodiphosphate (ME-2,4cPP) into 1-hydroxy-2-methyl-2-(E)-butenyl 4-diphosphate. The polypeptide is 4-hydroxy-3-methylbut-2-en-1-yl diphosphate synthase (flavodoxin) (Leptospira borgpetersenii serovar Hardjo-bovis (strain L550)).